Here is a 187-residue protein sequence, read N- to C-terminus: Threonylcarbamoyl-AMP synthase (187 aa).

Residues 3–187 form the YrdC-like domain; it reads QVTPSQISGI…IQTGHIFRQG (185 aa).

This sequence belongs to the SUA5 family. TsaC subfamily.

The protein resides in the cytoplasm. The catalysed reaction is L-threonine + hydrogencarbonate + ATP = L-threonylcarbamoyladenylate + diphosphate + H2O. In terms of biological role, required for the formation of a threonylcarbamoyl group on adenosine at position 37 (t(6)A37) in tRNAs that read codons beginning with adenine. Catalyzes the conversion of L-threonine, HCO(3)(-)/CO(2) and ATP to give threonylcarbamoyl-AMP (TC-AMP) as the acyladenylate intermediate, with the release of diphosphate. The polypeptide is Threonylcarbamoyl-AMP synthase (Shewanella amazonensis (strain ATCC BAA-1098 / SB2B)).